Reading from the N-terminus, the 756-residue chain is 5-methyltetrahydropteroyltriglutamate--homocysteine methyltransferase (756 aa).

Residues 16–19 (RELK) and K116 each bind 5-methyltetrahydropteroyltri-L-glutamate. Residues 435 to 437 (IGS) and E488 contribute to the L-homocysteine site. Residues 435–437 (IGS) and E488 each bind L-methionine. 5-methyltetrahydropteroyltri-L-glutamate is bound by residues 519–520 (RC) and W565. An L-homocysteine-binding site is contributed by D603. L-methionine is bound at residue D603. Residue E609 participates in 5-methyltetrahydropteroyltri-L-glutamate binding. Zn(2+)-binding residues include H645, C647, and E669. H698 serves as the catalytic Proton donor. C730 provides a ligand contact to Zn(2+).

The protein belongs to the vitamin-B12 independent methionine synthase family. Zn(2+) serves as cofactor.

It catalyses the reaction 5-methyltetrahydropteroyltri-L-glutamate + L-homocysteine = tetrahydropteroyltri-L-glutamate + L-methionine. Its pathway is amino-acid biosynthesis; L-methionine biosynthesis via de novo pathway; L-methionine from L-homocysteine (MetE route): step 1/1. In terms of biological role, catalyzes the transfer of a methyl group from 5-methyltetrahydrofolate to homocysteine resulting in methionine formation. The protein is 5-methyltetrahydropteroyltriglutamate--homocysteine methyltransferase of Marinobacter nauticus (strain ATCC 700491 / DSM 11845 / VT8) (Marinobacter aquaeolei).